Here is a 421-residue protein sequence, read N- to C-terminus: Serine protease HTRA2, mitochondrial (421 aa).

Residues 63 to 81 (VIRFFVPFSLGALASTMVA) form a helical membrane-spanning segment. Positions 74 to 77 (ALAS) match the IAP-binding motif. The tract at residues 138–301 (SNGSGFVIEQ…IPIDYVKVFL (164 aa)) is serine protease. Residues His156, Asp188, and Ser265 each act as charge relay system in the active site. The PDZ domain occupies 324-409 (MGITMLTLTP…ELDIVILRGV (86 aa)).

The protein belongs to the peptidase S1C family. In terms of assembly, interacts with th/DIAP1 (via BIR 2 domain).

It is found in the mitochondrion intermembrane space. Its subcellular location is the mitochondrion membrane. The enzyme catalyses Cleavage of non-polar aliphatic amino-acids at the P1 position, with a preference for Val, Ile and Met. At the P2 and P3 positions, Arg is selected most strongly with a secondary preference for other hydrophilic residues.. Functionally, serine protease that shows proteolytic activity against a non-specific substrate beta-casein. Promotes or induces cell death either by direct binding to and inhibition of BIRC proteins (also called inhibitor of apoptosis proteins, IAPs), leading to an increase in caspase activity, or by a BIRC inhibition-independent, caspase-independent and serine protease activity-dependent mechanism. Can antagonize antiapoptotic activity of th/Diap1 by directly inducing the degradation of th/Diap1. This is Serine protease HTRA2, mitochondrial from Drosophila virilis (Fruit fly).